An 805-amino-acid polypeptide reads, in one-letter code: Mediator of RNA polymerase II transcription subunit 25 (805 aa).

Disordered stretches follow at residues glycine 430–valine 455 and serine 786–asparagine 805. 2 stretches are compositionally biased toward low complexity: residues serine 438–serine 451 and serine 786–leucine 795.

The protein belongs to the Mediator complex subunit 25 family. As to quaternary structure, interacts with MYC2 (via N-terminus). MED25 competes with JAZ7 for binding to MYC2.

Functionally, component of the Mediator complex, a coactivator involved in the regulated transcription of nearly all RNA polymerase II-dependent genes. Mediator functions as a bridge to convey information from gene-specific regulatory proteins to the basal RNA polymerase II transcription machinery. Mediator is recruited to promoters by direct interactions with regulatory proteins and serves as a scaffold for the assembly of a functional pre-initiation complex with RNA polymerase II and the general transcription factors. Plays a positive role in wound-induced activation of jasmonate-responsive genes whose promoters are targeted by MYC2. This Solanum lycopersicum (Tomato) protein is Mediator of RNA polymerase II transcription subunit 25.